We begin with the raw amino-acid sequence, 459 residues long: Zinc finger chaperone zpr1 (459 aa).

2 consecutive C4-type zinc fingers follow at residues Cys-38–Cys-70 and Cys-259–Cys-291.

The protein belongs to the ZPR1 family.

Its subcellular location is the cytoplasm. It localises to the nucleus. Functionally, acts as a protein folding chaperone for elongation factor 1-alpha. This chain is Zinc finger chaperone zpr1, found in Schizosaccharomyces pombe (strain 972 / ATCC 24843) (Fission yeast).